The chain runs to 186 residues: ATP synthase subunit delta (186 aa).

It belongs to the ATPase delta chain family. F-type ATPases have 2 components, F(1) - the catalytic core - and F(0) - the membrane proton channel. F(1) has five subunits: alpha(3), beta(3), gamma(1), delta(1), epsilon(1). CF(0) has four main subunits: a(1), b(1), b'(1) and c(10-14). The alpha and beta chains form an alternating ring which encloses part of the gamma chain. F(1) is attached to F(0) by a central stalk formed by the gamma and epsilon chains, while a peripheral stalk is formed by the delta, b and b' chains.

Its subcellular location is the cell inner membrane. Its function is as follows. F(1)F(0) ATP synthase produces ATP from ADP in the presence of a proton or sodium gradient. F-type ATPases consist of two structural domains, F(1) containing the extramembraneous catalytic core and F(0) containing the membrane proton channel, linked together by a central stalk and a peripheral stalk. During catalysis, ATP synthesis in the catalytic domain of F(1) is coupled via a rotary mechanism of the central stalk subunits to proton translocation. Functionally, this protein is part of the stalk that links CF(0) to CF(1). It either transmits conformational changes from CF(0) to CF(1) or is implicated in proton conduction. The chain is ATP synthase subunit delta from Rhodopseudomonas palustris (strain ATCC BAA-98 / CGA009).